The sequence spans 329 residues: Serpentine receptor class alpha-7 (329 aa).

A run of 7 helical transmembrane segments spans residues 25 to 45 (YVYL…VKIV), 57 to 77 (ILLF…LFSA), 104 to 124 (YLKV…GLLL), 143 to 163 (VGIA…KIII), 187 to 207 (RLFA…SVLL), 237 to 257 (TICF…FGIF), and 273 to 293 (FIVV…ILLV).

It belongs to the nematode receptor-like protein sra family.

The protein localises to the membrane. In Caenorhabditis elegans, this protein is Serpentine receptor class alpha-7 (sra-7).